A 217-amino-acid polypeptide reads, in one-letter code: Octanoyltransferase (217 aa).

Residues 33-208 (SSSQDEIWLV…KLCSLLGIAS (176 aa)) enclose the BPL/LPL catalytic domain. Substrate-binding positions include 72-79 (RGGQVTYH), 139-141 (SIG), and 152-154 (GLA). Cys-170 (acyl-thioester intermediate) is an active-site residue.

Belongs to the LipB family.

It is found in the cytoplasm. The enzyme catalyses octanoyl-[ACP] + L-lysyl-[protein] = N(6)-octanoyl-L-lysyl-[protein] + holo-[ACP] + H(+). Its pathway is protein modification; protein lipoylation via endogenous pathway; protein N(6)-(lipoyl)lysine from octanoyl-[acyl-carrier-protein]: step 1/2. Its function is as follows. Catalyzes the transfer of endogenously produced octanoic acid from octanoyl-acyl-carrier-protein onto the lipoyl domains of lipoate-dependent enzymes. Lipoyl-ACP can also act as a substrate although octanoyl-ACP is likely to be the physiological substrate. This Pseudoalteromonas atlantica (strain T6c / ATCC BAA-1087) protein is Octanoyltransferase.